Here is a 118-residue protein sequence, read N- to C-terminus: NADH-quinone oxidoreductase subunit A (118 aa).

The next 3 helical transmembrane spans lie at 5 to 25 (YAFIGIFALAAITFPLLPLVL), 62 to 82 (LYALAFVIFDIETVFLYPWAV), and 87 to 107 (LGLFALFEMVVFLAILTIGLV).

It belongs to the complex I subunit 3 family. NDH-1 is composed of 14 different subunits. Subunits NuoA, H, J, K, L, M, N constitute the membrane sector of the complex.

It is found in the cell membrane. It carries out the reaction a quinone + NADH + 5 H(+)(in) = a quinol + NAD(+) + 4 H(+)(out). Functionally, NDH-1 shuttles electrons from NADH, via FMN and iron-sulfur (Fe-S) centers, to quinones in the respiratory chain. The immediate electron acceptor for the enzyme in this species is believed to be ubiquinone. Couples the redox reaction to proton translocation (for every two electrons transferred, four hydrogen ions are translocated across the cytoplasmic membrane), and thus conserves the redox energy in a proton gradient. This chain is NADH-quinone oxidoreductase subunit A, found in Herpetosiphon aurantiacus (strain ATCC 23779 / DSM 785 / 114-95).